A 442-amino-acid polypeptide reads, in one-letter code: Trigger factor (442 aa).

Residues 175–258 (GDFISISLHV…VNAVIEVSIP (84 aa)) enclose the PPIase FKBP-type domain.

Belongs to the FKBP-type PPIase family. Tig subfamily.

The protein resides in the cytoplasm. The enzyme catalyses [protein]-peptidylproline (omega=180) = [protein]-peptidylproline (omega=0). Functionally, involved in protein export. Acts as a chaperone by maintaining the newly synthesized protein in an open conformation. Functions as a peptidyl-prolyl cis-trans isomerase. This Chlamydia pneumoniae (Chlamydophila pneumoniae) protein is Trigger factor (tig).